Consider the following 136-residue polypeptide: IIYPGTLWCGNGNIANGTNELGLWKETDACCRTHDMCPDIIEAHGSKHGLTNPADYTRLNCECDEEFRHCLHNSGDAVSAAFVGRTYFTILGTQCFRLDYPIVKCKVKSTILRECKEYEFDTNAPQKYQWFDVLSY.

The Ca(2+) site is built by Trp-8, Gly-10, and Gly-12. 5 cysteine pairs are disulfide-bonded: Cys-9-Cys-31, Cys-30-Cys-70, Cys-37-Cys-63, Cys-61-Cys-95, and Cys-105-Cys-115. Asn-16 carries N-linked (GlcNAc...) asparagine glycosylation. Residue His-34 is part of the active site. Asp-35 contributes to the Ca(2+) binding site. Asp-64 is a catalytic residue.

The protein belongs to the phospholipase A2 family. Ca(2+) serves as cofactor. Expressed by the venom gland.

Its subcellular location is the secreted. It catalyses the reaction a 1,2-diacyl-sn-glycero-3-phosphocholine + H2O = a 1-acyl-sn-glycero-3-phosphocholine + a fatty acid + H(+). Functionally, PLA2 catalyzes the calcium-dependent hydrolysis of the 2-acyl groups in 3-sn-phosphoglycerides. The chain is Phospholipase A2 from Bombus pensylvanicus (American bumblebee).